A 94-amino-acid polypeptide reads, in one-letter code: Integration host factor subunit beta (94 aa).

It belongs to the bacterial histone-like protein family. As to quaternary structure, heterodimer of an alpha and a beta chain.

Functionally, this protein is one of the two subunits of integration host factor, a specific DNA-binding protein that functions in genetic recombination as well as in transcriptional and translational control. This is Integration host factor subunit beta from Pseudomonas paraeruginosa (strain DSM 24068 / PA7) (Pseudomonas aeruginosa (strain PA7)).